We begin with the raw amino-acid sequence, 1180 residues long: Protocadherin-12 (1180 aa).

A signal peptide spans 1–17; it reads MMLLLPFLLGLLGPGSY. Residues 18-716 are Extracellular-facing; the sequence is LFISGDCQEV…HEPGVLSTPA (699 aa). Cadherin domains follow at residues 28-135, 136-244, 245-352, 355-460, and 461-565; these read ATVM…QPQF, PKDE…SPVF, AESS…APSI, TWAS…APVF, and EKSR…APEV. N-linked (GlcNAc...) asparagine glycosylation is found at asparagine 265 and asparagine 415. Asparagine 582, asparagine 659, and asparagine 662 each carry an N-linked (GlcNAc...) asparagine glycan. Positions 600–711 constitute a Cadherin 6 domain; sequence PAGTGIPPKA…LRDSAHEPGV (112 aa). The chain crosses the membrane as a helical span at residues 717–737; sequence LALICLAVLLAIFGLLLALFV. At 738–1180 the chain is on the cytoplasmic side; that stretch reads SICRTERKDN…ESRLGCGRNL (443 aa). Disordered stretches follow at residues 857–930 and 973–1026; these read NASR…GPHQ and QFQP…PEED. Residue serine 859 is modified to Phosphoserine. The segment covering 904–918 has biased composition (polar residues); the sequence is PASSATLRRQRNFNG. Over residues 1014-1026 the composition is skewed to acidic residues; the sequence is PDLEEGPPSPEED. Serine 1064 carries the post-translational modification Phosphoserine. Residues 1076–1093 show a composition bias toward polar residues; that stretch reads SSPDATTSEEPRTFQTFG. Disordered regions lie at residues 1076-1104 and 1156-1180; these read SSPD…ELSP and SGAS…GRNL.

N-glycosylated. Post-translationally, cleaved by ADAM10 close to the transmembrane domain to release the Protocadherin-12, secreted form in the serum. Cleavage results in reduced cellular adhesion in a cell migration assay. In terms of tissue distribution, expressed in endothelial cells: localizes in vasculogenic rather than angiogenic endothelium. Strongly expressed in a subset of invasive cells of the placenta, named glycogen-rich trophoblasts cells (at protein level). glycogen-rich trophoblasts cells originate from the from the ectoplacental cone where they rapidly form tight islets (at protein level). In adult mice, present at high level in mesangial cells of kidney glomeruli, while expression was not detected in other types of perivascular cells.

The protein resides in the cell membrane. It is found in the cell junction. The protein localises to the secreted. Cellular adhesion molecule that may play an important role in cell-cell interactions at interendothelial junctions. Acts as a regulator of cell migration, probably via increasing cell-cell adhesion. Promotes homotypic calcium-dependent aggregation and adhesion and clusters at intercellular junctions. Unable to bind to catenins, weakly associates with the cytoskeleton. The sequence is that of Protocadherin-12 from Mus musculus (Mouse).